A 54-amino-acid chain; its full sequence is Large ribosomal subunit protein bL33 (54 aa).

Belongs to the bacterial ribosomal protein bL33 family.

In Corynebacterium efficiens (strain DSM 44549 / YS-314 / AJ 12310 / JCM 11189 / NBRC 100395), this protein is Large ribosomal subunit protein bL33.